The primary structure comprises 181 residues: MASSIVSSAAVATRSNVAQASMVAPFTGLKSAASFPVTKKNNNVDITSLASNGGRVRCMQVWPPINMKKYETLSYLPDLSDEQLLKEVEYLLKNGWVPCLEFETEHGFVYREHNSSPGYYDGRYWTMWKLPMFGCTDGTQVLAEVQEAKNAYPQAWIRIIGFDNVRQVQCISFIAYKPEGY.

A chloroplast-targeting transit peptide spans 1-57 (MASSIVSSAAVATRSNVAQASMVAPFTGLKSAASFPVTKKNNNVDITSLASNGGRVR).

Belongs to the RuBisCO small chain family. Heterohexadecamer of 8 large and 8 small subunits.

It is found in the plastid. Its subcellular location is the chloroplast. Functionally, ruBisCO catalyzes two reactions: the carboxylation of D-ribulose 1,5-bisphosphate, the primary event in carbon dioxide fixation, as well as the oxidative fragmentation of the pentose substrate. Both reactions occur simultaneously and in competition at the same active site. Although the small subunit is not catalytic it is essential for maximal activity. The protein is Ribulose bisphosphate carboxylase small subunit, chloroplastic 1 of Solanum tuberosum (Potato).